The following is a 103-amino-acid chain: Serine protease inhibitor 4 (103 aa).

Residues Cys56 and Cys73 are joined by a disulfide bond.

It belongs to the protease inhibitor I3 (leguminous Kunitz-type inhibitor) family.

It localises to the vacuole. In terms of biological role, inhibitor of serine protease. May protect the plant by inhibiting proteases of invading organisms. This Solanum tuberosum (Potato) protein is Serine protease inhibitor 4.